The chain runs to 593 residues: Tyrosine-protein phosphatase non-receptor type 9 (593 aa).

At M1 the chain carries N-acetylmethionine. The disordered stretch occupies residues 1 to 21; it reads MEPATAPRPDMAPELTPEEEQ. A CRAL-TRIO domain is found at 84–243; that stretch reads EEPLRSEILS…NLGGYIKIDL (160 aa). One can recognise a Tyrosine-protein phosphatase domain in the interval 303–574; sequence IYEEYEDIRR…YFCYKAILEF (272 aa). Substrate is bound by residues D470, 515-521, and Q559; that span reads CSAGIGR. Residue C515 is the Phosphocysteine intermediate of the active site.

The protein belongs to the protein-tyrosine phosphatase family. Non-receptor class 3 subfamily.

It localises to the cytoplasm. The catalysed reaction is O-phospho-L-tyrosyl-[protein] + H2O = L-tyrosyl-[protein] + phosphate. In terms of biological role, protein-tyrosine phosphatase that could participate in the transfer of hydrophobic ligands or in functions of the Golgi apparatus. This Rattus norvegicus (Rat) protein is Tyrosine-protein phosphatase non-receptor type 9 (Ptpn9).